The sequence spans 580 residues: WD repeat-containing protein 46 (580 aa).

The segment at 34 to 108 is disordered; the sequence is SWKEYKKMKQ…QQEKMKVTKD (75 aa). 2 stretches are compositionally biased toward basic and acidic residues: residues 64-85 and 98-108; these read TEGRAKKPKVLTKEQLERHDTG and LQQEKMKVTKD. WD repeat units follow at residues 193–234, 235–272, 274–312, 315–354, 357–396, and 399–436; these read AALD…YTYV, YDNLGTELHCLKTMYDTARLEFLPHHFLLVGSSRNSFL, YVDVSVGKQVASFATKSGTLDVMCQNPANAIIHTGHTNG, SLWSPNSKEPLVKILTHLSAVKGIAVDDQGNYMATTGLDR, RIWDVRMFRQLHAYSLPFGVSNVAISQKMNVACAVGNHVQ, and RGMHNGTCKEPYLVHNCGGVVTDLRFVPWEDVLGIGHA.

In terms of assembly, part of the small subunit (SSU) processome.

It localises to the nucleus. The protein resides in the nucleolus. Scaffold component of the nucleolar structure. Part of the small subunit (SSU) processome, first precursor of the small eukaryotic ribosomal subunit. Required for 18S rRNA processing. Plays a role in negative regulation of detoxification genes by inhibiting protein levels of transcription factor skn-1, leading to down-regulation of skn-1 target genes. This is WD repeat-containing protein 46 from Caenorhabditis elegans.